The sequence spans 178 residues: Interleukin-10 (178 aa).

A signal peptide spans 1-18 (MHSSALLCCLVFLTGVRA). Disulfide bonds link C30–C126 and C80–C132. N-linked (GlcNAc...) asparagine glycosylation is present at N134.

It belongs to the IL-10 family. In terms of assembly, homodimer. Interacts with IL10RA and IL10RB.

It localises to the secreted. In terms of biological role, major immune regulatory cytokine that acts on many cells of the immune system where it has profound anti-inflammatory functions, limiting excessive tissue disruption caused by inflammation. Mechanistically, IL10 binds to its heterotetrameric receptor comprising IL10RA and IL10RB leading to JAK1 and STAT2-mediated phosphorylation of STAT3. In turn, STAT3 translocates to the nucleus where it drives expression of anti-inflammatory mediators. Targets antigen-presenting cells (APCs) such as macrophages and monocytes and inhibits their release of pro-inflammatory cytokines including granulocyte-macrophage colony-stimulating factor /GM-CSF, granulocyte colony-stimulating factor/G-CSF, IL-1 alpha, IL-1 beta, IL-6, IL-8 and TNF-alpha. Also interferes with antigen presentation by reducing the expression of MHC-class II and co-stimulatory molecules, thereby inhibiting their ability to induce T cell activation. In addition, controls the inflammatory response of macrophages by reprogramming essential metabolic pathways including mTOR signaling. The chain is Interleukin-10 (IL10) from Callithrix jacchus (White-tufted-ear marmoset).